The sequence spans 89 residues: UPF0223 protein BCB4264_A4064 (89 aa).

This sequence belongs to the UPF0223 family.

In Bacillus cereus (strain B4264), this protein is UPF0223 protein BCB4264_A4064.